Here is an 872-residue protein sequence, read N- to C-terminus: Facilitated trehalose transporter Tret1 (872 aa).

Disordered stretches follow at residues 1–40 (MSGRDNRGAGGGGGGGGGGSGGGHHHHQPLSSAMGKLKEK), 53–217 (VESN…KATS), 262–281 (SSSEEEFHKTRREFQGRKHQ), and 293–315 (KVLQGSSTDSDEEGDDAEHKRLI). Over 1-406 (MSGRDNRGAG…VYRPTTNPIY (406 aa)) the chain is Cytoplasmic. The segment covering 8–22 (GAGGGGGGGGGGSGG) has biased composition (gly residues). Low complexity-rich tracts occupy residues 55-68 (SNLSTSNTATSLDT), 84-98 (RHPQQSPSQSQQQQR), and 121-132 (PPTQQQPQQQHQ). Phosphoserine is present on residues Ser-262, Ser-263, and Ser-264. A phosphoserine mark is found at Ser-334 and Ser-336. Positions 340 to 361 (FLTSRQHFQQQRSISTDSRKSR) are disordered. Over residues 344 to 355 (RQHFQQQRSIST) the composition is skewed to polar residues. The chain crosses the membrane as a helical span at residues 407-427 (IWTQVLAALSVSLGSLVVGFV). The Extracellular portion of the chain corresponds to 428 to 454 (SAYTSPALITMTNGNITSFEVTPQAAS). N-linked (GlcNAc...) asparagine glycosylation occurs at Asn-442. Residues 455–475 (WVGGIMPLAGLLGGIAGGPFI) form a helical membrane-spanning segment. Over 476–488 (EYLGRRNTILTTA) the chain is Cytoplasmic. Residues 489 to 509 (VPFIVSSLLIACAVNITMVLL) form a helical membrane-spanning segment. At 510 to 511 (GR) the chain is on the extracellular side. A helical membrane pass occupies residues 512–532 (FLAGFCVGIASLSLPVYLGET). Residues 533–538 (VQPEVR) are Cytoplasmic-facing. The chain crosses the membrane as a helical span at residues 539–559 (GTLGLLPTAFGNIGILLCFVA). Topologically, residues 560–566 (GTYMDWS) are extracellular. A helical membrane pass occupies residues 567 to 587 (MLAFLGAALPVPFLILMFLIP). Over 588–650 (ETPRWYVSRG…ELLKRNNLKP (63 aa)) the chain is Cytoplasmic. Residues 651-671 (LSISLGLMFFQQLSGINAVIF) form a helical membrane-spanning segment. At 672–687 (YTVQIFKDAGSTIDGN) the chain is on the extracellular side. The chain crosses the membrane as a helical span at residues 688–708 (VCTIIVGIVNFMATFIGIILI). Residues 709–714 (DRAGRK) are Cytoplasmic-facing. The chain crosses the membrane as a helical span at residues 715-735 (ILLYVSNVAMIITLFVLGGFF). Topologically, residues 736–755 (YCKDKAGIDVSNVGWLPLSC) are extracellular. A helical transmembrane segment spans residues 756–776 (FVVYILGFSLGFGPIPWLMMG). At 777–784 (EILPAKIR) the chain is on the cytoplasmic side. The chain crosses the membrane as a helical span at residues 785–803 (GSAASVATAFNWTCTFVVT). At 804 to 816 (KTFQDMLDVIGSY) the chain is on the extracellular side. A helical membrane pass occupies residues 817 to 837 (GAFWLFGAICFIGLFFVIIYV). Topologically, residues 838–872 (PETQGKTLEDIERKMMGRVRRMSSVANIKPLSFNM) are cytoplasmic. Phosphoserine is present on residues Ser-860 and Ser-861.

The protein belongs to the major facilitator superfamily. Sugar transporter (TC 2.A.1.1) family. Trehalose transporter subfamily.

It is found in the cell membrane. Functionally, low-capacity facilitative transporter for trehalose. Does not transport maltose, sucrose or lactose. Mediates the bidirectional transfer of trehalose. Responsible for the transport of trehalose synthesized in the fat body and the incorporation of trehalose into other tissues that require a carbon source, thereby regulating trehalose levels in the hemolymph. In Drosophila willistoni (Fruit fly), this protein is Facilitated trehalose transporter Tret1.